A 951-amino-acid polypeptide reads, in one-letter code: Bifunctional glutamine synthetase adenylyltransferase/adenylyl-removing enzyme (951 aa).

The interval Met-1–Ala-445 is adenylyl removase. Residues His-454 to Ala-951 form an adenylyl transferase region.

The protein belongs to the GlnE family. Mg(2+) serves as cofactor.

The catalysed reaction is [glutamine synthetase]-O(4)-(5'-adenylyl)-L-tyrosine + phosphate = [glutamine synthetase]-L-tyrosine + ADP. It catalyses the reaction [glutamine synthetase]-L-tyrosine + ATP = [glutamine synthetase]-O(4)-(5'-adenylyl)-L-tyrosine + diphosphate. Functionally, involved in the regulation of glutamine synthetase GlnA, a key enzyme in the process to assimilate ammonia. When cellular nitrogen levels are high, the C-terminal adenylyl transferase (AT) inactivates GlnA by covalent transfer of an adenylyl group from ATP to specific tyrosine residue of GlnA, thus reducing its activity. Conversely, when nitrogen levels are low, the N-terminal adenylyl removase (AR) activates GlnA by removing the adenylyl group by phosphorolysis, increasing its activity. The regulatory region of GlnE binds the signal transduction protein PII (GlnB) which indicates the nitrogen status of the cell. In Pectobacterium atrosepticum (strain SCRI 1043 / ATCC BAA-672) (Erwinia carotovora subsp. atroseptica), this protein is Bifunctional glutamine synthetase adenylyltransferase/adenylyl-removing enzyme.